The chain runs to 366 residues: tRNA pseudouridine synthase B (366 aa).

Catalysis depends on Asp44, which acts as the Nucleophile.

It belongs to the pseudouridine synthase TruB family. Type 1 subfamily.

The catalysed reaction is uridine(55) in tRNA = pseudouridine(55) in tRNA. Functionally, responsible for synthesis of pseudouridine from uracil-55 in the psi GC loop of transfer RNAs. The chain is tRNA pseudouridine synthase B from Treponema pallidum (strain Nichols).